Here is a 164-residue protein sequence, read N- to C-terminus: B-phycoerythrin alpha chain (164 aa).

Residues Cys82 and Cys139 each contribute to the (2R,3E)-phycoerythrobilin site.

Belongs to the phycobiliprotein family. Heteromer of 6 alpha, 6 beta and one gamma chain. In terms of processing, contains two covalently linked bilin chromophores.

The protein localises to the plastid. Its subcellular location is the chloroplast thylakoid membrane. In terms of biological role, light-harvesting photosynthetic bile pigment-protein from the phycobiliprotein complex. The protein is B-phycoerythrin alpha chain (cpeA) of Rhodella violacea (Red alga).